Here is a 285-residue protein sequence, read N- to C-terminus: Urease accessory protein UreD (285 aa).

This sequence belongs to the UreD family. As to quaternary structure, ureD, UreF and UreG form a complex that acts as a GTP-hydrolysis-dependent molecular chaperone, activating the urease apoprotein by helping to assemble the nickel containing metallocenter of UreC. The UreE protein probably delivers the nickel.

It localises to the cytoplasm. Required for maturation of urease via the functional incorporation of the urease nickel metallocenter. This is Urease accessory protein UreD from Citrobacter koseri (strain ATCC BAA-895 / CDC 4225-83 / SGSC4696).